The following is a 124-amino-acid chain: Small ribosomal subunit protein uS13 (124 aa).

The tract at residues 94–124 (KGLPVRGQRTKTNARTRKGPKRTVAGKKKAR) is disordered.

This sequence belongs to the universal ribosomal protein uS13 family. Part of the 30S ribosomal subunit. Forms a loose heterodimer with protein S19. Forms two bridges to the 50S subunit in the 70S ribosome.

In terms of biological role, located at the top of the head of the 30S subunit, it contacts several helices of the 16S rRNA. In the 70S ribosome it contacts the 23S rRNA (bridge B1a) and protein L5 of the 50S subunit (bridge B1b), connecting the 2 subunits; these bridges are implicated in subunit movement. Contacts the tRNAs in the A and P-sites. This Pseudarthrobacter chlorophenolicus (strain ATCC 700700 / DSM 12829 / CIP 107037 / JCM 12360 / KCTC 9906 / NCIMB 13794 / A6) (Arthrobacter chlorophenolicus) protein is Small ribosomal subunit protein uS13.